We begin with the raw amino-acid sequence, 950 residues long: Valine--tRNA ligase, mitochondrial (950 aa).

The transit peptide at 1–90 directs the protein to the mitochondrion; the sequence is MFHFQRSFSS…ITIQDALARF (90 aa). The short motif at 67 to 77 is the 'HIGH' region element; sequence PNITGKLHIGH. Residues 556–560 carry the 'KMSKS' region motif; sequence KMSKS. Lysine 559 provides a ligand contact to ATP.

It belongs to the class-I aminoacyl-tRNA synthetase family.

It localises to the mitochondrion. It catalyses the reaction tRNA(Val) + L-valine + ATP = L-valyl-tRNA(Val) + AMP + diphosphate. The sequence is that of Valine--tRNA ligase, mitochondrial (vas1) from Schizosaccharomyces pombe (strain 972 / ATCC 24843) (Fission yeast).